The following is a 344-amino-acid chain: UDP-3-O-acylglucosamine N-acyltransferase (344 aa).

The active-site Proton acceptor is His-250.

The protein belongs to the transferase hexapeptide repeat family. LpxD subfamily. As to quaternary structure, homotrimer.

The enzyme catalyses a UDP-3-O-[(3R)-3-hydroxyacyl]-alpha-D-glucosamine + a (3R)-hydroxyacyl-[ACP] = a UDP-2-N,3-O-bis[(3R)-3-hydroxyacyl]-alpha-D-glucosamine + holo-[ACP] + H(+). It participates in bacterial outer membrane biogenesis; LPS lipid A biosynthesis. In terms of biological role, catalyzes the N-acylation of UDP-3-O-acylglucosamine using 3-hydroxyacyl-ACP as the acyl donor. Is involved in the biosynthesis of lipid A, a phosphorylated glycolipid that anchors the lipopolysaccharide to the outer membrane of the cell. This is UDP-3-O-acylglucosamine N-acyltransferase from Maricaulis maris (strain MCS10) (Caulobacter maris).